A 356-amino-acid polypeptide reads, in one-letter code: sn-glycerol-3-phosphate import ATP-binding protein UgpC (356 aa).

One can recognise an ABC transporter domain in the interval 4-235; the sequence is LKLQAVTKSW…PASLFVASFI (232 aa). 37–44 lines the ATP pocket; the sequence is GPSGCGKS.

Belongs to the ABC transporter superfamily. sn-glycerol-3-phosphate importer (TC 3.A.1.1.3) family. The complex is composed of two ATP-binding proteins (UgpC), two transmembrane proteins (UgpA and UgpE) and a solute-binding protein (UgpB).

The protein localises to the cell inner membrane. The enzyme catalyses sn-glycerol 3-phosphate(out) + ATP + H2O = sn-glycerol 3-phosphate(in) + ADP + phosphate + H(+). Functionally, part of the ABC transporter complex UgpBAEC involved in sn-glycerol-3-phosphate (G3P) import. Responsible for energy coupling to the transport system. This chain is sn-glycerol-3-phosphate import ATP-binding protein UgpC, found in Escherichia coli O6:K15:H31 (strain 536 / UPEC).